The primary structure comprises 212 residues: Imidazole glycerol phosphate synthase subunit HisH (212 aa).

The region spanning 3–212 (DVAIIDYGMG…MLANFISWAP (210 aa)) is the Glutamine amidotransferase type-1 domain. The Nucleophile role is filled by Cys-82. Catalysis depends on residues His-192 and Glu-194.

Heterodimer of HisH and HisF.

The protein resides in the cytoplasm. The catalysed reaction is 5-[(5-phospho-1-deoxy-D-ribulos-1-ylimino)methylamino]-1-(5-phospho-beta-D-ribosyl)imidazole-4-carboxamide + L-glutamine = D-erythro-1-(imidazol-4-yl)glycerol 3-phosphate + 5-amino-1-(5-phospho-beta-D-ribosyl)imidazole-4-carboxamide + L-glutamate + H(+). It carries out the reaction L-glutamine + H2O = L-glutamate + NH4(+). Its pathway is amino-acid biosynthesis; L-histidine biosynthesis; L-histidine from 5-phospho-alpha-D-ribose 1-diphosphate: step 5/9. Its function is as follows. IGPS catalyzes the conversion of PRFAR and glutamine to IGP, AICAR and glutamate. The HisH subunit catalyzes the hydrolysis of glutamine to glutamate and ammonia as part of the synthesis of IGP and AICAR. The resulting ammonia molecule is channeled to the active site of HisF. This is Imidazole glycerol phosphate synthase subunit HisH from Aromatoleum aromaticum (strain DSM 19018 / LMG 30748 / EbN1) (Azoarcus sp. (strain EbN1)).